The following is a 59-amino-acid chain: UPF0434 protein Shew_1640 (59 aa).

This sequence belongs to the UPF0434 family.

The protein is UPF0434 protein Shew_1640 of Shewanella loihica (strain ATCC BAA-1088 / PV-4).